Here is a 420-residue protein sequence, read N- to C-terminus: UDP-N-acetylglucosamine 1-carboxyvinyltransferase (420 aa).

Phosphoenolpyruvate is bound at residue 22-23; it reads KN. Arg-94 lines the UDP-N-acetyl-alpha-D-glucosamine pocket. Cys-118 (proton donor) is an active-site residue. Cys-118 is subject to 2-(S-cysteinyl)pyruvic acid O-phosphothioketal. 2 residues coordinate UDP-N-acetyl-alpha-D-glucosamine: Asp-306 and Ile-328.

The protein belongs to the EPSP synthase family. MurA subfamily.

The protein resides in the cytoplasm. The enzyme catalyses phosphoenolpyruvate + UDP-N-acetyl-alpha-D-glucosamine = UDP-N-acetyl-3-O-(1-carboxyvinyl)-alpha-D-glucosamine + phosphate. Its pathway is cell wall biogenesis; peptidoglycan biosynthesis. Cell wall formation. Adds enolpyruvyl to UDP-N-acetylglucosamine. The polypeptide is UDP-N-acetylglucosamine 1-carboxyvinyltransferase (Jannaschia sp. (strain CCS1)).